We begin with the raw amino-acid sequence, 252 residues long: Probable transcriptional regulatory protein A1E_02520 (252 aa).

The protein belongs to the TACO1 family.

The protein resides in the cytoplasm. In Rickettsia canadensis (strain McKiel), this protein is Probable transcriptional regulatory protein A1E_02520.